We begin with the raw amino-acid sequence, 653 residues long: MIPPQEASARRREIEDKLKQEEETLSFIRDSLEKSDQLTKNMVSILSSFESRLMKLENSIIPVHKQTENLQRLQENVEKTLSCLDHVISYYHVASDTEKIIREGPTGRLEEYLGSMAKIQKAVEYFQDNSPDSPELNKVKLLFERGKESLESEFRSLMTRHSKVISPVLVLDLISADDELEVQEDVVLEHLPESVLQDVIRISRWLVEYGRNQDFMNVYYQIRSSQLDRSIKGLKEHFRKSSSSSGVPYSPAIPNKRKDTPTKKPIKRPGRDDMLDVETDAYIHCVSAFVRLAQSEYQLLMGIIPEHHQKKTFDSLIQDALDGLMLEGENIVSAARKAIIRHDFSTVLTVFPILRHLKQTKPEFDQVLQGTAASTKNKLPGLITSMETIGAKALEDFADNIKNDPDKEYNMPKDGTVHELTSNAILFLQQLLDFQETAGAMLASQETSSSATSYNSEFSKRLLSTYICKVLGNLQLNLLSKSKVYEDPALSAIFLHNNYNYILKSLEKSELIQLVAVTQKTAERSYREHIEQQIQTYQRSWLKVTDYIAEKNLPVFQPGVKLRDKERQMIKERFKGFNDGLEELCKIQKAWAIPDTEQRDKIRQAQKSIVKETYGAFLHRYSSVPFTKNPEKYIKYRVEQVGDMIDRLFDTSA.

An SEC8 and ARHQ binding region spans residues 1-384; it reads MIPPQEASAR…TKNKLPGLIT (384 aa). Coiled coils occupy residues 5-42 and 63-85; these read QEAS…TKNM and VHKQ…SCLD. Ser-133 carries the phosphoserine modification. The segment at 238–272 is disordered; it reads FRKSSSSSGVPYSPAIPNKRKDTPTKKPIKRPGRD.

Belongs to the EXO70 family. The exocyst complex is composed of EXOC1, EXOC2, EXOC3, EXOC4, EXOC5, EXOC6, EXOC7 and EXOC8. Interacts with ARHQ in a GTP-dependent manner. Interacts with RAB11FIP3.

The protein localises to the cytoplasm. It localises to the cytosol. It is found in the cell membrane. Its subcellular location is the midbody. The protein resides in the midbody ring. Its function is as follows. Component of the exocyst complex involved in the docking of exocytic vesicles with fusion sites on the plasma membrane. In adipocytes, plays a crucial role in targeting SLC2A4 vesicle to the plasma membrane in response to insulin, perhaps directing the vesicle to the precise site of fusion. It is required for neuron survival and plays an essential role in cortical development. The protein is Exocyst complex component 7 (Exoc7) of Rattus norvegicus (Rat).